We begin with the raw amino-acid sequence, 373 residues long: Histidinol-phosphate aminotransferase (373 aa).

N6-(pyridoxal phosphate)lysine is present on Lys233.

This sequence belongs to the class-II pyridoxal-phosphate-dependent aminotransferase family. Histidinol-phosphate aminotransferase subfamily. Homodimer. Pyridoxal 5'-phosphate serves as cofactor.

The enzyme catalyses L-histidinol phosphate + 2-oxoglutarate = 3-(imidazol-4-yl)-2-oxopropyl phosphate + L-glutamate. It functions in the pathway amino-acid biosynthesis; L-histidine biosynthesis; L-histidine from 5-phospho-alpha-D-ribose 1-diphosphate: step 7/9. The sequence is that of Histidinol-phosphate aminotransferase from Nitratidesulfovibrio vulgaris (strain ATCC 29579 / DSM 644 / CCUG 34227 / NCIMB 8303 / VKM B-1760 / Hildenborough) (Desulfovibrio vulgaris).